Consider the following 1861-residue polypeptide: Golgi-specific brefeldin A-resistance guanine nucleotide exchange factor 1 (1861 aa).

The tract at residues 1–211 (MVDKNIYIIQ…EPKSYVGTNM (211 aa)) is DCB; DCB:DCB domain and DCB:HUS domain interaction. Positions 1 to 380 (MVDKNIYIIQ…SVHDMDYVNP (380 aa)) are interaction with RAB1B. Disordered stretches follow at residues 210 to 264 (NMKK…LTGG) and 289 to 353 (CTDS…VESI). The segment covering 227-241 (WKKQKRSPRPPRHTT) has biased composition (basic residues). Residues 253 to 262 (NGATLPSNLT) show a composition bias toward polar residues. A phosphoserine mark is found at S349 and S352. T507 carries the phosphothreonine modification. The tract at residues 530–550 (RIPSFVTELYINYDCDYYCSN) is HUS; DCB:HUS domain interaction. Residues 603 to 634 (QEKKETARPGFEAVDGNPETNKSERATSDGKS) form a disordered region. An SEC7 domain is found at 692–882 (ELIEIKNKKK…EDMYHAIKNE (191 aa)). Residues 886 to 1372 (MPEEQTGLVR…LSRPGPSPLV (487 aa)) are phosphatidylinositol-phosphate binding; required for translocation to the leading edge and for ARF1 activation upon GPCR signaling. Residues 1286-1296 (TARADAPDAGA) are compositionally biased toward low complexity. Residues 1286-1335 (TARADAPDAGAQSDSELPSYHQNDVSLDRGYTSDSEVYTDHGRPGKIHRS) are disordered. The segment covering 1297–1310 (QSDSELPSYHQNDV) has biased composition (polar residues). The residue at position 1298 (S1298) is a Phosphoserine. Residue Y1316 is modified to Phosphotyrosine. Residues S1318, S1320, and S1335 each carry the phosphoserine modification. Phosphothreonine is present on T1337. 2 disordered regions span residues 1431–1486 (GCKS…EGVP) and 1727–1812 (PMPA…PLIL). Residues 1434 to 1448 (SQDKRSKSHKYDSKG) show a composition bias toward basic and acidic residues. A phosphoserine mark is found at S1477, S1775, and S1786. Low complexity predominate over residues 1776–1793 (TRAPSSSSPGSPMASSPS).

As to quaternary structure, can form homodimers and probably homotetramers. Interacts with COPG1; the interaction is independent on ARF1 activation. Interacts with ARF1, ARF3, ARF4 and ARF5. Interacts with RAB1B (GTP-bound form); required for GBF1 membrane association. Interacts with GGA1, GGA2 and GGA3. Interacts with USO1. Interacts (via SEC7 domain) with PNPLA2 (via C-terminus); the interaction is direct. Interacts with ARMH3.

The protein resides in the golgi apparatus. The protein localises to the cis-Golgi network. It is found in the endoplasmic reticulum-Golgi intermediate compartment. Its subcellular location is the trans-Golgi network. It localises to the cytoplasm. The protein resides in the lipid droplet. The protein localises to the membrane. In terms of biological role, guanine-nucleotide exchange factor (GEF) for members of the Arf family of small GTPases involved in trafficking in the early secretory pathway; its GEF activity initiates the coating of nascent vesicles via the localized generation of activated ARFs through replacement of GDP with GTP. Recruitment to cis-Golgi membranes requires membrane association of Arf-GDP and can be regulated by ARF1, ARF3, ARF4 and ARF5. Involved in the recruitment of the COPI coat complex to the endoplasmic reticulum exit sites (ERES), and the endoplasmic reticulum-Golgi intermediate (ERGIC) and cis-Golgi compartments which implicates ARF1 activation. Involved in COPI vesicle-dependent retrograde transport from the ERGIC and cis-Golgi compartments to the endoplasmic reticulum (ER). Involved in the trans-Golgi network recruitment of GGA1, GGA2, GGA3, BIG1, BIG2, and the AP-1 adaptor protein complex related to chlathrin-dependent transport; the function requires its GEF activity (probably at least in part on ARF4 and ARF5). Has GEF activity towards ARF1. Has in vitro GEF activity towards ARF5. Involved in the processing of PSAP. Required for the assembly of the Golgi apparatus. The AMPK-phosphorylated form is involved in Golgi disassembly during mitotis and under stress conditions. May be involved in the COPI vesicle-dependent recruitment of PNPLA2 to lipid droplets; however, this function is under debate. In neutrophils, involved in G protein-coupled receptor (GPCR)-mediated chemotaxis und superoxide production. Proposed to be recruited by phosphatidylinositol-phosphates generated upon GPCR stimulation to the leading edge where it recruits and activates ARF1, and is involved in recruitment of GIT2 and the NADPH oxidase complex. Plays a role in maintaining mitochondrial morphology. The polypeptide is Golgi-specific brefeldin A-resistance guanine nucleotide exchange factor 1 (Mus musculus (Mouse)).